Reading from the N-terminus, the 422-residue chain is E3 ubiquitin-protein ligase CBLL2 (422 aa).

The segment at 54–94 (CDKCDLPIKIYGRIIPCKHAFCYNCANLYDKIGYKICPRCS) adopts an RING-type zinc-finger fold. The tract at residues 93–151 (CSYPVLRIEEHKRGSVFMCSVVQGCKRTYLSQKSLQAHIKRRHKRARKQVASASLEKLR) is HYB domain. Residues 109–135 (FMCSVVQGCKRTYLSQKSLQAHIKRRH) form a C2H2-type zinc finger. Disordered regions lie at residues 190-213 (MQQM…PELS) and 378-422 (QTDA…HRPY). Residues 195–205 (HEQHNQPHKDL) are compositionally biased toward basic and acidic residues. Pro residues predominate over residues 393-405 (LPPPPPTWSPPPS). Positions 410–422 (GSHHSYQRRHRPY) are enriched in basic residues.

In terms of assembly, homodimer.

It localises to the cytoplasm. The catalysed reaction is S-ubiquitinyl-[E2 ubiquitin-conjugating enzyme]-L-cysteine + [acceptor protein]-L-lysine = [E2 ubiquitin-conjugating enzyme]-L-cysteine + N(6)-ubiquitinyl-[acceptor protein]-L-lysine.. The protein operates within protein modification; protein ubiquitination. In terms of biological role, E3 ubiquitin ligase catalyzing the covalent attachment of ubiquitin moieties onto substrate proteins. May operate on tyrosine-phosphorylated SRC substrates. The protein is E3 ubiquitin-protein ligase CBLL2 (CBLL2) of Macaca fascicularis (Crab-eating macaque).